The following is a 225-amino-acid chain: Enolase-phosphatase E1 (225 aa).

This sequence belongs to the HAD-like hydrolase superfamily. MasA/MtnC family. In terms of assembly, monomer. Mg(2+) serves as cofactor.

It catalyses the reaction 5-methylsulfanyl-2,3-dioxopentyl phosphate + H2O = 1,2-dihydroxy-5-(methylsulfanyl)pent-1-en-3-one + phosphate. Its pathway is amino-acid biosynthesis; L-methionine biosynthesis via salvage pathway; L-methionine from S-methyl-5-thio-alpha-D-ribose 1-phosphate: step 3/6. It functions in the pathway amino-acid biosynthesis; L-methionine biosynthesis via salvage pathway; L-methionine from S-methyl-5-thio-alpha-D-ribose 1-phosphate: step 4/6. Its function is as follows. Bifunctional enzyme that catalyzes the enolization of 2,3-diketo-5-methylthiopentyl-1-phosphate (DK-MTP-1-P) into the intermediate 2-hydroxy-3-keto-5-methylthiopentenyl-1-phosphate (HK-MTPenyl-1-P), which is then dephosphorylated to form the acireductone 1,2-dihydroxy-3-keto-5-methylthiopentene (DHK-MTPene). The polypeptide is Enolase-phosphatase E1 (Shewanella woodyi (strain ATCC 51908 / MS32)).